Reading from the N-terminus, the 142-residue chain is Transmembrane protein 170A (142 aa).

Topologically, residues 1–48 are lumenal; that stretch reads MEGGGGGLGGEPGLLQQILSLRLVPRVGNVTDCQRATLCSFPEMWYGV. Asparagine 29 carries N-linked (GlcNAc...) asparagine glycosylation. A helical transmembrane segment spans residues 49 to 69; the sequence is FLWALVSSLFFHIPAGLLALF. Topologically, residues 70-78 are cytoplasmic; the sequence is TLRHHKYGR. Residues 79 to 99 traverse the membrane as a helical segment; that stretch reads FMSVGIFLMGVLGPISAGILT. The Lumenal portion of the chain corresponds to 100–114; that stretch reads SAAIAGVYKAAGKEM. The chain crosses the membrane as a helical span at residues 115-135; it reads IPFEALVLGVGQTFCVLIVSF. At 136 to 142 the chain is on the cytoplasmic side; that stretch reads LRILATL.

The protein belongs to the TMEM170 family.

The protein resides in the endoplasmic reticulum membrane. Its subcellular location is the nucleus envelope. In terms of biological role, may regulate membrane morphogenesis in the endoplasmic reticulum (ER) by promoting ER sheet formation at the expense of ER tubules. The polypeptide is Transmembrane protein 170A (tmem170a) (Xenopus laevis (African clawed frog)).